Consider the following 370-residue polypeptide: 4-hydroxy-3-methylbut-2-en-1-yl diphosphate synthase (flavodoxin) (370 aa).

[4Fe-4S] cluster contacts are provided by C270, C273, C305, and E312.

Belongs to the IspG family. The cofactor is [4Fe-4S] cluster.

It carries out the reaction (2E)-4-hydroxy-3-methylbut-2-enyl diphosphate + oxidized [flavodoxin] + H2O + 2 H(+) = 2-C-methyl-D-erythritol 2,4-cyclic diphosphate + reduced [flavodoxin]. It functions in the pathway isoprenoid biosynthesis; isopentenyl diphosphate biosynthesis via DXP pathway; isopentenyl diphosphate from 1-deoxy-D-xylulose 5-phosphate: step 5/6. Functionally, converts 2C-methyl-D-erythritol 2,4-cyclodiphosphate (ME-2,4cPP) into 1-hydroxy-2-methyl-2-(E)-butenyl 4-diphosphate. This Marinomonas sp. (strain MWYL1) protein is 4-hydroxy-3-methylbut-2-en-1-yl diphosphate synthase (flavodoxin).